The primary structure comprises 613 residues: Portal protein (613 aa).

The interval 577–613 is disordered; sequence ATGGDHGIRQAPSARGDTEPDHAKSKPARDPPPGAGS. A compositionally biased stretch (basic and acidic residues) spans 592–605; sequence GDTEPDHAKSKPAR.

This sequence belongs to the herpesviridae portal protein family. As to quaternary structure, homododecamerizes. Interacts with terminase subunits TRM1 and TRM3.

Its subcellular location is the virion. The protein resides in the host nucleus. It is found in the host cytoplasm. Functionally, forms a portal in the viral capsid through which viral DNA is translocated during DNA packaging. Assembles as a dodecamer at a single fivefold axe of the T=16 icosahedric capsid. Binds to the molecular motor that translocates the viral DNA, termed terminase. The chain is Portal protein from Epstein-Barr virus (strain B95-8) (HHV-4).